A 559-amino-acid polypeptide reads, in one-letter code: NAD-dependent malic enzyme 2 (559 aa).

The active-site Proton donor is the Tyr-98. Arg-151 contacts NAD(+). Lys-169 functions as the Proton acceptor in the catalytic mechanism. Positions 240, 241, and 264 each coordinate a divalent metal cation. Asp-264 and Asn-413 together coordinate NAD(+).

It belongs to the malic enzymes family. In terms of assembly, homotetramer. Mg(2+) serves as cofactor. Requires Mn(2+) as cofactor.

The enzyme catalyses (S)-malate + NAD(+) = pyruvate + CO2 + NADH. The catalysed reaction is oxaloacetate + H(+) = pyruvate + CO2. This Vibrio vulnificus (strain YJ016) protein is NAD-dependent malic enzyme 2.